Here is a 96-residue protein sequence, read N- to C-terminus: UPF0235 protein MK0273 (96 aa).

Belongs to the UPF0235 family.

The protein is UPF0235 protein MK0273 of Methanopyrus kandleri (strain AV19 / DSM 6324 / JCM 9639 / NBRC 100938).